Here is a 359-residue protein sequence, read N- to C-terminus: MESADFYEVEPRPPMSSHLQSPPHAPSNAAFGFPRGAGPAPPPAPPAAPEPLGGICEHETSIDISAYIDPAAFNDEFLADLFQHSRQQEKAKAAAGPAGGGGDFDYPGAPAGPGGAVMSAGAHGPPPGYGCAAAGYLDGRLEPLYERVGAPALRPLVIKQEPREEDEAKQLALAGLFPYQPPPPPPPPHPHASPAHLAAPHLQFQIAHCGQTTMHLQPGHPTPPPTPVPSPHAAPALGAAGLPGPGSALKGLAGAHPDLRTGGGGGGSGAGAGKAKKSVDKNSNEYRVRRERNNIAVRKSRDKAKQRNVETQQKVLELTSDNDRLRKRVEQLSRELDTLRGIFRQLPESSLVKAMGNCA.

The disordered stretch occupies residues 1-55 (MESADFYEVEPRPPMSSHLQSPPHAPSNAAFGFPRGAGPAPPPAPPAAPEPLGGI). Residues 1-70 (MESADFYEVE…SIDISAYIDP (70 aa)) are required to repress E2F1:TFDP1-mediated transcription, to inhibit cell cycle and to induce adipocyte differentiation. Residues 29 to 38 (AAFGFPRGAG) are compositionally biased toward low complexity. Residues 39 to 49 (PAPPPAPPAAP) are compositionally biased toward pro residues. The required for interaction with TRIB1 stretch occupies residues 54 to 72 (GICEHETSIDISAYIDPAA). Residues 126–200 (PPGYGCAAAG…HASPAHLAAP (75 aa)) are required to induce adipocyte differentiation. Lys159 carries the N6-acetyllysine; alternate modification. A Glycyl lysine isopeptide (Lys-Gly) (interchain with G-Cter in SUMO); alternate cross-link involves residue Lys159. Lys159 participates in a covalent cross-link: Glycyl lysine isopeptide (Lys-Gly) (interchain with G-Cter in SUMO2); alternate. 2 disordered regions span residues 176–195 (LFPY…ASPA) and 213–293 (TMHL…RERN). Pro residues predominate over residues 179–191 (YQPPPPPPPPHPH). The tract at residues 180 to 194 (QPPPPPPPPHPHASP) is required to functionally cooperate with SREBF1 in promoter activation. Ser193 is subject to Phosphoserine. Pro residues predominate over residues 220–232 (HPTPPPTPVPSPH). 2 positions are modified to phosphothreonine; by GSK3: Thr222 and Thr226. The residue at position 230 (Ser230) is a Phosphoserine; by GSK3. The span at 233–255 (AAPALGAAGLPGPGSALKGLAGA) shows a compositional bias: low complexity. The segment at 240–359 (AGLPGPGSAL…SLVKAMGNCA (120 aa)) is interaction with FOXO1. Positions 261-272 (TGGGGGGSGAGA) are enriched in gly residues. Positions 277-293 (KSVDKNSNEYRVRRERN) are enriched in basic and acidic residues. The region spanning 283 to 346 (SNEYRVRRER…DTLRGIFRQL (64 aa)) is the bZIP domain. A DNA-binding region spans residues 286–301 (YRVRRERNNIAVRKSR). A basic motif region spans residues 287-314 (RVRRERNNIAVRKSRDKAKQRNVETQQK). A leucine-zipper region spans residues 318-346 (LTSDNDRLRKRVEQLSRELDTLRGIFRQL).

The protein belongs to the bZIP family. C/EBP subfamily. As to quaternary structure, binds DNA as a homodimer and as a heterodimer. Can form stable heterodimers with CEBPB, CEBPD, CEBPE and CEBPG. Interacts with PRDM16. Interacts with UBN1. Interacts with ZNF638; this interaction increases transcriptional activation. Interacts with the complex TFDP2:E2F1; the interaction prevents CEBPA binding to target gene promoters and represses its transcriptional activity. Interacts with RB1. Interacts (when phosphorylated at Ser-193) with CDK2, CDK4, E2F4 and SMARCA2. Interacts with SREBPF1. Interacts with FOXO1 (via the Fork-head domain); the interaction increases when FOXO1 is deacetylated. Interacts with SIX1. Interacts (via recognition sequence) with TRIB1. Interacts (via bZIP domain) with OVOL2 (via zinc-finger domains); the interaction inhibits the transcription factor activity of CEBPA and is required to repress adipogenesis. Interacts with TAF1A and UBTF. In terms of assembly, interacts with TAF1A and UBTF. Interacts with NPM1. In terms of processing, sumoylated, sumoylation blocks the inhibitory effect on cell proliferation by disrupting the interaction with SMARCA2. Phosphorylation at Ser-193 is required for interaction with CDK2, CDK4 and SWI/SNF complex leading to cell cycle inhibition. Dephosphorylated at Ser-193 by protein phosphatase 2A (PP2A) through PI3K/AKT signaling pathway regulation. Phosphorylation at Thr-222 and Thr-226 by GSK3 is constitutive in adipose tissue and lung. In liver, both Thr-222 and Thr-226 are phosphorylated only during feeding but not during fasting. Phosphorylation of the GSK3 consensus sites selectively decreases transactivation activity on IRE-controlled promoters. Post-translationally, ubiquitinated by COP1 upon interaction with TRIB1. As to expression, isoform 2 and isoform 3 are expressed in adipose tissue and liver (at protein level).

The protein localises to the nucleus. The protein resides in the nucleolus. In terms of biological role, transcription factor that coordinates proliferation arrest and the differentiation of myeloid progenitors, adipocytes, hepatocytes, and cells of the lung and the placenta. Binds directly to the consensus DNA sequence 5'-T[TG]NNGNAA[TG]-3' acting as an activator on distinct target genes. During early embryogenesis, plays essential and redundant functions with CEBPB. Essential for the transition from common myeloid progenitors (CMP) to granulocyte/monocyte progenitors (GMP). Critical for the proper development of the liver and the lung. Necessary for terminal adipocyte differentiation, is required for postnatal maintenance of systemic energy homeostasis and lipid storage. To regulate these different processes at the proper moment and tissue, interplays with other transcription factors and modulators. Down-regulates the expression of genes that maintain cells in an undifferentiated and proliferative state through E2F1 repression, which is critical for its ability to induce adipocyte and granulocyte terminal differentiation. Reciprocally E2F1 blocks adipocyte differentiation by binding to specific promoters and repressing CEBPA binding to its target gene promoters. Proliferation arrest also depends on a functional binding to SWI/SNF complex. In liver, regulates gluconeogenesis and lipogenesis through different mechanisms. To regulate gluconeogenesis, functionally cooperates with FOXO1 binding to IRE-controlled promoters and regulating the expression of target genes such as PCK1 or G6PC1. To modulate lipogenesis, interacts and transcriptionally synergizes with SREBF1 in promoter activation of specific lipogenic target genes such as ACAS2. In adipose tissue, seems to act as FOXO1 coactivator accessing to ADIPOQ promoter through FOXO1 binding sites. Can act as dominant-negative. Binds DNA and have transctivation activity, even if much less efficiently than isoform 2. Does not inhibit cell proliferation. Functionally, directly and specifically enhances ribosomal DNA transcription interacting with RNA polymerase I-specific cofactors and inducing histone acetylation. This chain is CCAAT/enhancer-binding protein alpha, found in Mus musculus (Mouse).